We begin with the raw amino-acid sequence, 60 residues long: UPF0509 protein ESA_01586 (60 aa).

It belongs to the UPF0509 family.

The protein is UPF0509 protein ESA_01586 of Cronobacter sakazakii (strain ATCC BAA-894) (Enterobacter sakazakii).